The chain runs to 197 residues: Putative AgrB-like protein (197 aa).

Transmembrane regions (helical) follow at residues 29 to 49 (FGFT…AVGL), 79 to 99 (SIGC…VPFA), 102 to 122 (YAWI…APYY), and 143 to 163 (ILIV…LVLG).

The protein belongs to the AgrB family.

The protein localises to the cell membrane. Its function is as follows. May be involved in the proteolytic processing of a quorum sensing system signal molecule precursor. This is Putative AgrB-like protein from Halalkalibacterium halodurans (strain ATCC BAA-125 / DSM 18197 / FERM 7344 / JCM 9153 / C-125) (Bacillus halodurans).